Here is a 73-residue protein sequence, read N- to C-terminus: Disintegrin lachesin (73 aa).

Residues 1–73 enclose the Disintegrin domain; sequence EAGEECDCGA…ADCPRNGYYG (73 aa). Disulfide bonds link Cys-6–Cys-21, Cys-8–Cys-16, Cys-15–Cys-38, Cys-29–Cys-35, Cys-34–Cys-59, and Cys-47–Cys-66. Positions 51-53 match the Cell attachment site motif; the sequence is RGD. The segment at 51 to 73 is disordered; it reads RGDNPDDRCTGQSADCPRNGYYG.

Belongs to the venom metalloproteinase (M12B) family. P-II subfamily. P-IIa sub-subfamily. As to quaternary structure, monomer (disintegrin). In terms of tissue distribution, expressed by the venom gland.

The protein resides in the secreted. Functionally, inhibits fibrinogen interaction with platelets. Acts by binding to alpha-IIb/beta-3 (ITGA2B/ITGB3) on the platelet surface and inhibits aggregation induced by ADP, thrombin, platelet-activating factor and collagen. The chain is Disintegrin lachesin from Lachesis muta muta (Bushmaster).